The primary structure comprises 253 residues: Exosome complex component Rrp4 (253 aa).

The 74-residue stretch at 80 to 153 (GDIVIGIVVD…SRGPILTVQD (74 aa)) folds into the S1 motif domain.

The protein belongs to the RRP4 family. As to quaternary structure, component of the archaeal exosome complex. Forms a trimer of Rrp4 and/or Csl4 subunits. The trimer associates with a hexameric ring-like arrangement composed of 3 Rrp41-Rrp42 heterodimers.

It is found in the cytoplasm. Its function is as follows. Non-catalytic component of the exosome, which is a complex involved in RNA degradation. Increases the RNA binding and the efficiency of RNA degradation. Confers strong poly(A) specificity to the exosome. This Ignisphaera aggregans (strain DSM 17230 / JCM 13409 / AQ1.S1) protein is Exosome complex component Rrp4.